The primary structure comprises 250 residues: Ubiquinone/menaquinone biosynthesis C-methyltransferase UbiE (250 aa).

Residues Thr-73, Asp-94, and 122-123 each bind S-adenosyl-L-methionine; that span reads DA.

Belongs to the class I-like SAM-binding methyltransferase superfamily. MenG/UbiE family.

It carries out the reaction a 2-demethylmenaquinol + S-adenosyl-L-methionine = a menaquinol + S-adenosyl-L-homocysteine + H(+). It catalyses the reaction a 2-methoxy-6-(all-trans-polyprenyl)benzene-1,4-diol + S-adenosyl-L-methionine = a 5-methoxy-2-methyl-3-(all-trans-polyprenyl)benzene-1,4-diol + S-adenosyl-L-homocysteine + H(+). Its pathway is quinol/quinone metabolism; menaquinone biosynthesis; menaquinol from 1,4-dihydroxy-2-naphthoate: step 2/2. It participates in cofactor biosynthesis; ubiquinone biosynthesis. Methyltransferase required for the conversion of demethylmenaquinol (DMKH2) to menaquinol (MKH2) and the conversion of 2-polyprenyl-6-methoxy-1,4-benzoquinol (DDMQH2) to 2-polyprenyl-3-methyl-6-methoxy-1,4-benzoquinol (DMQH2). The chain is Ubiquinone/menaquinone biosynthesis C-methyltransferase UbiE from Coxiella burnetii (strain CbuK_Q154) (Coxiella burnetii (strain Q154)).